The chain runs to 2090 residues: Non-reducing polyketide synthase rdc1 (2090 aa).

The tract at residues 12-250 (FLVGDQVDSW…NPLNIHALQH (239 aa)) is N-terminal acylcarrier protein transacylase (SAT) domain. Positions 375–808 (TGRIAIVGMS…GGNACLLLED (434 aa)) constitute a Ketosynthase family 3 (KS3) domain. Residues C551, H686, and H726 each act as for beta-ketoacyl synthase activity in the active site. Residues 912–1195 (IFVFSGQGSH…NQVCTQFVRA (284 aa)) form a malonyl-CoA:ACP transacylase (MAT) domain region. S1003 functions as the For acyl/malonyl transferase activity in the catalytic mechanism. Residues 1293–1433 (QHVAKESSSN…LVVQKNVKAL (141 aa)) are N-terminal hotdog fold. The region spanning 1293–1607 (QHVAKESSSN…FVRISNALLQ (315 aa)) is the PKS/mFAS DH domain. Residues 1304–1604 (GKLEITFRAS…NLSFVRISNA (301 aa)) form a product template (PT) domain region. The C-terminal hotdog fold stretch occupies residues 1459–1607 (QGHWLKHDIF…FVRISNALLQ (149 aa)). The tract at residues 1615–1650 (SKPVGRGMAKQEKQEVPATTEVVRQPEKEESRHSVD) is disordered. Residues 1638–1649 (RQPEKEESRHSV) show a composition bias toward basic and acidic residues. One can recognise a Carrier domain in the interval 1649-1726 (VDTPSFSDVL…DIKRAFDILT (78 aa)). The residue at position 1686 (S1686) is an O-(pantetheine 4'-phosphoryl)serine. The interval 1820-1964 (ADGTGSIATY…THQHLKALFA (145 aa)) is thioesterase (TE) domain.

Its pathway is secondary metabolite biosynthesis. Functionally, non-reducing polyketide synthase; part of the gene cluster that mediates the biosynthesis of radicicol, a resorcylic acid lactone (RAL) that irreversibly inhibits the HSP90 molecular chaperone, an important target for cancer chemotherapy. The radicicol cluster encodes only two apparent post-PKS enzymes, a cytochrome P450 monooxygenase (rdc4) and a non-heme halogenase (rdc2) that could introduce the epoxide and the chlorine, respectively. If this cluster includes all the genes required for radicicol biosynthesis, the remaining structural features of radicicol are presumably generated by the PKSs rdc1 and rdc5. The C-2' ketone could arise if the R-PKS rdc5 and NR-PKS rdc1 each carry out four iterations, in contrast to the five iteration-three iteration split for the hypothemycin PKSs. The origin of the cis 5',6' double bond is not known. The radicicol R-PKS rdc5 ER domain may catalyze either double bond isomerization or reduction in the third iteration. This chain is Non-reducing polyketide synthase rdc1, found in Metacordyceps chlamydosporia (Nematophagous fungus).